We begin with the raw amino-acid sequence, 445 residues long: Alkylglycerol monooxygenase (445 aa).

2 consecutive transmembrane segments (helical) span residues 43–63 and 111–131; these read ATPF…ILKG and WDSP…YYWF. Positions 120-249 constitute a Fatty acid hydroxylase domain; sequence AFLGVDFGYY…LIIWDKIFGT (130 aa). The Histidine box-1 motif lies at 132 to 136; the sequence is HRMAH. A Histidine box-2 motif is present at residues 145–149; that stretch reads HQTHH. The Histidine box-3 motif lies at 221-225; the sequence is HRVHH. The next 3 membrane-spanning stretches (helical) occupy residues 334–354, 363–383, and 413–433; these read LLKI…EETF, VTLL…GFLL, and VPSL…FWGV.

This sequence belongs to the sterol desaturase family. TMEM195 subfamily. Fe cation serves as cofactor.

It localises to the endoplasmic reticulum membrane. It catalyses the reaction 1-O-(1,2-saturated-alkyl)-sn-glycerol + (6R)-L-erythro-5,6,7,8-tetrahydrobiopterin + O2 = a 1-(1-hydroxyalkyl)-sn-glycerol + (6R)-L-erythro-6,7-dihydrobiopterin + H2O. Glyceryl-ether monooxygenase that cleaves the O-alkyl bond of ether lipids. Ether lipids are essential components of brain membranes. The chain is Alkylglycerol monooxygenase (AGMO) from Homo sapiens (Human).